A 313-amino-acid polypeptide reads, in one-letter code: UDP-N-acetylenolpyruvoylglucosamine reductase (313 aa).

In terms of domain architecture, FAD-binding PCMH-type spans 31–207 (VGGPADALVA…TGVDLGLGFD (177 aa)). Arg-180 is a catalytic residue. The active-site Proton donor is the Cys-236. The active site involves Glu-307.

The protein belongs to the MurB family. FAD serves as cofactor.

It localises to the cytoplasm. It carries out the reaction UDP-N-acetyl-alpha-D-muramate + NADP(+) = UDP-N-acetyl-3-O-(1-carboxyvinyl)-alpha-D-glucosamine + NADPH + H(+). The protein operates within cell wall biogenesis; peptidoglycan biosynthesis. Its function is as follows. Cell wall formation. The chain is UDP-N-acetylenolpyruvoylglucosamine reductase from Desulfosudis oleivorans (strain DSM 6200 / JCM 39069 / Hxd3) (Desulfococcus oleovorans).